The primary structure comprises 90 residues: NELL2-interacting cell ontogeny regulator 1 (90 aa).

Positions 1-26 are cleaved as a signal peptide; sequence MVSSGYLQAVMLLLAVQLLCFRPSDA.

The protein belongs to the NICOL family.

Its subcellular location is the secreted. In terms of biological role, mRNA-binding protein which interacts with a range of target mRNAs and may promote extracellular matrix production. The polypeptide is NELL2-interacting cell ontogeny regulator 1 (Salmo salar (Atlantic salmon)).